Consider the following 410-residue polypeptide: MKQLIAKWNRVSLVKRIIIGIIIGITLAVTVPESTKWISIFGSLFVGALKAVAPVLVFFLVISAISRHQSGQKTNIQHILILYGFSTFLASLTAVVASFLFPVHLSLTESAKEVSPPSNITEVIQSLLFNIVDNPVHALLNANYIGILTWAVLLGIALRTAPETTKNVIAHFSDAISQIVTWVINFAPIGIMGLVFDAIVTNGLSALIDYGKLLAVLLGTMCFVAFVMNPLIVFLNIRQNPYPLVWRCIRESGVTAFFTRSSAANIPVNLRLSEMLGLNKNTYSISIPLGATINMAGAAVTISVLTLAAVHTLEIEVDLGTALILSVLSAIAAAGASGVAGGSLLLIPLACSLFGIPNDIAMQVVGVGFIIGVLQDSCETALNSSSDVLFTATAEYAKRRKEGKQVAIKA.

9 consecutive transmembrane segments (helical) span residues 11–31 (VSLV…AVTV), 45–65 (FVGA…ISAI), 79–99 (ILIL…VASF), 138–158 (ALLN…GIAL), 179–199 (IVTW…FDAI), 214–234 (LAVL…LIVF), 285–305 (ISIP…ISVL), 327–347 (VLSA…LLLI), and 353–373 (LFGI…IIGV).

This sequence belongs to the dicarboxylate/amino acid:cation symporter (DAACS) (TC 2.A.23) family.

The protein localises to the cell membrane. The catalysed reaction is L-serine(in) + Na(+)(in) = L-serine(out) + Na(+)(out). The enzyme catalyses L-threonine(in) + Na(+)(in) = L-threonine(out) + Na(+)(out). In terms of biological role, involved in the import of serine and threonine into the cell, with the concomitant import of sodium (symport system). This chain is Serine/threonine transporter SstT, found in Geobacillus thermodenitrificans (strain NG80-2).